The following is an 80-amino-acid chain: Raniseptin-6 (80 aa).

A signal peptide spans 1–22; sequence MAFLKKSLFLVLFLGIVSLSIC. Positions 23-49 are excised as a propeptide; it reads EEEKREGEEEEKQEEENEELSEEELRE.

It belongs to the frog skin active peptide (FSAP) family. Dermaseptin subfamily. As to expression, expressed by the skin glands.

The protein localises to the secreted. Has antibacterial activity. In Boana raniceps (Chaco tree frog), this protein is Raniseptin-6.